We begin with the raw amino-acid sequence, 401 residues long: uncharacterized protein (401 aa).

At Lys-242 the chain carries N6-(pyridoxal phosphate)lysine.

This sequence belongs to the class-I pyridoxal-phosphate-dependent aminotransferase family. Homodimer. It depends on pyridoxal 5'-phosphate as a cofactor.

The protein localises to the cytoplasm. This is an uncharacterized protein from Saccharolobus solfataricus (strain ATCC 35092 / DSM 1617 / JCM 11322 / P2) (Sulfolobus solfataricus).